The primary structure comprises 416 residues: Imidazolonepropionase (416 aa).

Residues histidine 78 and histidine 80 each contribute to the Fe(3+) site. Zn(2+)-binding residues include histidine 78 and histidine 80. Residues arginine 87, tyrosine 150, and histidine 183 each coordinate 4-imidazolone-5-propanoate. N-formimidoyl-L-glutamate is bound at residue tyrosine 150. Residue histidine 248 coordinates Fe(3+). Residue histidine 248 participates in Zn(2+) binding. Glutamine 251 contributes to the 4-imidazolone-5-propanoate binding site. Aspartate 323 lines the Fe(3+) pocket. Zn(2+) is bound at residue aspartate 323. Positions 325 and 327 each coordinate N-formimidoyl-L-glutamate. Threonine 328 is a 4-imidazolone-5-propanoate binding site.

The protein belongs to the metallo-dependent hydrolases superfamily. HutI family. The cofactor is Zn(2+). Fe(3+) is required as a cofactor.

The protein resides in the cytoplasm. It catalyses the reaction 4-imidazolone-5-propanoate + H2O = N-formimidoyl-L-glutamate. It functions in the pathway amino-acid degradation; L-histidine degradation into L-glutamate; N-formimidoyl-L-glutamate from L-histidine: step 3/3. Functionally, catalyzes the hydrolytic cleavage of the carbon-nitrogen bond in imidazolone-5-propanoate to yield N-formimidoyl-L-glutamate. It is the third step in the universal histidine degradation pathway. In Vibrio parahaemolyticus serotype O3:K6 (strain RIMD 2210633), this protein is Imidazolonepropionase.